A 322-amino-acid polypeptide reads, in one-letter code: Deoxycytidylate deaminase (322 aa).

Positions 173-311 constitute a CMP/dCMP-type deaminase domain; that stretch reads SWDSYFMEMA…SLLQAAGVQL (139 aa). Position 246 (H246) interacts with Zn(2+). E248 (proton donor) is an active-site residue. Zn(2+) contacts are provided by C273 and C276.

The protein belongs to the cytidine and deoxycytidylate deaminase family. Zn(2+) serves as cofactor.

The protein resides in the cytoplasm. It is found in the nucleus. The catalysed reaction is dCMP + H2O + H(+) = dUMP + NH4(+). Functionally, supplies the nucleotide substrate for thymidylate synthetase. This chain is Deoxycytidylate deaminase, found in Schizosaccharomyces pombe (strain 972 / ATCC 24843) (Fission yeast).